A 99-amino-acid chain; its full sequence is MAEGGFDPCECVCSHEHAMRRLINLLRQSQSYCTDTECLQELPGPSSDNGISITMILMAWMVIAVILFLLRPPNLRGSNLTGKPASPHNGQDPPAPPVD.

The Lumenal portion of the chain corresponds to 1-49; the sequence is MAEGGFDPCECVCSHEHAMRRLINLLRQSQSYCTDTECLQELPGPSSDN. The helical transmembrane segment at 50 to 70 threads the bilayer; the sequence is GISITMILMAWMVIAVILFLL. Topologically, residues 71–99 are cytoplasmic; the sequence is RPPNLRGSNLTGKPASPHNGQDPPAPPVD. The tract at residues 78–99 is disordered; that stretch reads SNLTGKPASPHNGQDPPAPPVD.

The protein resides in the endoplasmic reticulum membrane. The chain is Small integral membrane protein 14 (SMIM14) from Bos taurus (Bovine).